The primary structure comprises 312 residues: Small kinetochore-associated protein (312 aa).

Positions 1-171 (MAAPEAEAQE…PFNKQKPEEE (171 aa)) are disordered. Basic and acidic residues predominate over residues 131 to 143 (DVTKVTKSRRENG). An interaction with SPAG5 region spans residues 156 to 312 (LRNSYKPFNK…LEEMEQLLEM (157 aa)). Coiled coils occupy residues 166–210 (QKPE…LEKF) and 246–287 (LLET…QFLE).

Part of an astrin (SPAG5)-kinastrin (SKAP) complex containing KNSTRN, SPAG5, PLK1, DYNLL1 and SGO2A. Interacts with SPAG5. Directly binds to microtubules, although at relatively low affinity. Interacts with CENPE; this interaction greatly favors microtubule-binding. Interacts with DSN1/MIS13; leading to localization to kinetochores. Interacts with MAPRE1/EB1; leading to localization to the microtubule plus ends. Interacts with PRPF19. Interacts with DYNLL1. Interacts with MAP4.

The protein resides in the nucleus. It localises to the chromosome. Its subcellular location is the centromere. It is found in the kinetochore. The protein localises to the cytoplasm. The protein resides in the cytoskeleton. It localises to the spindle pole. Its subcellular location is the microtubule organizing center. Essential component of the mitotic spindle required for faithful chromosome segregation and progression into anaphase. Promotes the metaphase-to-anaphase transition and is required for chromosome alignment, normal timing of sister chromatid segregation, and maintenance of spindle pole architecture. The astrin (SPAG5)-kinastrin (SKAP) complex promotes stable microtubule-kinetochore attachments. Required for kinetochore oscillations and dynamics of microtubule plus-ends during live cell mitosis, possibly by forming a link between spindle microtubule plus-ends and mitotic chromosomes to achieve faithful cell division. The chain is Small kinetochore-associated protein (Knstrn) from Mus musculus (Mouse).